We begin with the raw amino-acid sequence, 291 residues long: Pyridoxal 5'-phosphate synthase subunit PdxS (291 aa).

Asp-23 provides a ligand contact to D-ribose 5-phosphate. The Schiff-base intermediate with D-ribose 5-phosphate role is filled by Lys-80. Residue Gly-152 coordinates D-ribose 5-phosphate. Arg-164 lines the D-glyceraldehyde 3-phosphate pocket. D-ribose 5-phosphate contacts are provided by residues Gly-213 and 234–235 (GS).

This sequence belongs to the PdxS/SNZ family. In terms of assembly, in the presence of PdxT, forms a dodecamer of heterodimers.

The enzyme catalyses aldehydo-D-ribose 5-phosphate + D-glyceraldehyde 3-phosphate + L-glutamine = pyridoxal 5'-phosphate + L-glutamate + phosphate + 3 H2O + H(+). Its pathway is cofactor biosynthesis; pyridoxal 5'-phosphate biosynthesis. Catalyzes the formation of pyridoxal 5'-phosphate from ribose 5-phosphate (RBP), glyceraldehyde 3-phosphate (G3P) and ammonia. The ammonia is provided by the PdxT subunit. Can also use ribulose 5-phosphate and dihydroxyacetone phosphate as substrates, resulting from enzyme-catalyzed isomerization of RBP and G3P, respectively. The chain is Pyridoxal 5'-phosphate synthase subunit PdxS from Bifidobacterium longum (strain DJO10A).